The primary structure comprises 382 residues: Pentraxin-related protein PTX3 (382 aa).

The signal sequence occupies residues 1–17; sequence MHISVILFCALWSAVSA. The stretch at 79–137 forms a coiled coil; that stretch reads VMLRGELQKLQAELGRLEGSLQKLCGPEAPSETRLARALDDLLQASRDAGRRLARLEDA. 2 cysteine pairs are disulfide-bonded: C180-C358 and C211-C272. The Pentraxin (PTX) domain occupies 180–382; that stretch reads CETAILFPMR…QPHGGAQYVY (203 aa). An N-linked (GlcNAc...) asparagine glycan is attached at N221.

As to quaternary structure, homooctamer; disulfide-linked. Binds to C1q.

The protein localises to the secreted. Plays a role in the regulation of innate resistance to pathogens, inflammatory reactions, possibly clearance of self-components and female fertility. The protein is Pentraxin-related protein PTX3 (PTX3) of Bos taurus (Bovine).